A 195-amino-acid polypeptide reads, in one-letter code: Phosphoheptose isomerase (195 aa).

An SIS domain is found at 36 to 195 (LAHCLLSDGK…DLVDHQLFGE (160 aa)). 51–53 (NGG) contacts substrate. Zn(2+) is bound by residues H60 and E64. Substrate contacts are provided by residues E64, 93–94 (ND), 119–121 (STS), S124, and Q174. The Zn(2+) site is built by Q174 and H182.

The protein belongs to the SIS family. GmhA subfamily. As to quaternary structure, homotetramer. The cofactor is Zn(2+).

It is found in the cytoplasm. It carries out the reaction 2 D-sedoheptulose 7-phosphate = D-glycero-alpha-D-manno-heptose 7-phosphate + D-glycero-beta-D-manno-heptose 7-phosphate. The protein operates within carbohydrate biosynthesis; D-glycero-D-manno-heptose 7-phosphate biosynthesis; D-glycero-alpha-D-manno-heptose 7-phosphate and D-glycero-beta-D-manno-heptose 7-phosphate from sedoheptulose 7-phosphate: step 1/1. Catalyzes the isomerization of sedoheptulose 7-phosphate in D-glycero-D-manno-heptose 7-phosphate. The polypeptide is Phosphoheptose isomerase (Methylococcus capsulatus (strain ATCC 33009 / NCIMB 11132 / Bath)).